Here is a 199-residue protein sequence, read N- to C-terminus: Recombination protein RecR (199 aa).

Residues 57–72 (CQSCRTYTEETLCPIC) form a C4-type zinc finger. A Toprim domain is found at 81–176 (STICVVETPA…MISRIAHGVP (96 aa)).

The protein belongs to the RecR family.

In terms of biological role, may play a role in DNA repair. It seems to be involved in an RecBC-independent recombinational process of DNA repair. It may act with RecF and RecO. This Shewanella baltica (strain OS155 / ATCC BAA-1091) protein is Recombination protein RecR.